Reading from the N-terminus, the 241-residue chain is Chloride intracellular channel protein 1 (241 aa).

N-acetylalanine is present on Ala2. The segment at 2–90 (AEEQPQVELF…EEFLEAVLCP (89 aa)) is required for insertion into the membrane. Lys13 is subject to N6-acetyllysine. A glutathione-binding site is contributed by Cys24. At Cys24 the chain carries S-glutathionyl cysteine; alternate. The short motif at 24-27 (CPFS) is the G-site element. Residues Cys24 and Cys59 are joined by a disulfide bond. A helical transmembrane segment spans residues 26-46 (FSQRLFMVLWLKGVTFNVTTV). Residues Leu64 and Thr77 each contribute to the glutathione site. The GST C-terminal domain occupies 93–233 (YPKLAALNPE…PDDEEIELAY (141 aa)). Position 119 is an N6-acetyllysine (Lys119). Position 121 is a phosphoserine (Ser121). Lys131 carries the N6-acetyllysine modification. Phosphoserine is present on residues Ser156 and Ser211. A Phosphotyrosine modification is found at Tyr233.

Belongs to the chloride channel CLIC family. Monomer. Homodimer (in vitro). Interacts with TRAPPC2. Dimerization requires a conformation change that leads to the exposure of a large hydrophobic surface. In vivo, this may lead to membrane insertion. Interacts with AKAP9. Post-translationally, hydrogen peroxide treatment causes a conformation change, leading to dimerization and formation of an intramolecular disulfide bond between Cys-24 and Cys-59. As to expression, expression is prominent in heart, placenta, liver, kidney and pancreas.

It is found in the nucleus. Its subcellular location is the nucleus membrane. The protein resides in the cytoplasm. The protein localises to the cell membrane. It localises to the endoplasmic reticulum. It catalyses the reaction L-dehydroascorbate + 2 glutathione = glutathione disulfide + L-ascorbate. The enzyme catalyses chloride(in) = chloride(out). The catalysed reaction is iodide(out) = iodide(in). It carries out the reaction thiocyanate(in) = thiocyanate(out). It catalyses the reaction nitrate(in) = nitrate(out). The enzyme catalyses bromide(in) = bromide(out). The catalysed reaction is fluoride(in) = fluoride(out). Its activity is regulated as follows. The oxidoreductase activity is inhibited by rapamycin, amphotericin B and IAA-94. The channel conductance is regulated by pH and redox membrane potential. Inhibited by IAA-94. In terms of biological role, in the soluble state, catalyzes glutaredoxin-like thiol disulfide exchange reactions with reduced glutathione as electron donor. Reduces selenite and dehydroascorbate and may act as an antioxidant during oxidative stress response. Can insert into membranes and form voltage-dependent multi-ion conductive channels. Membrane insertion seems to be redox-regulated and may occur only under oxidizing conditions. Involved in regulation of the cell cycle. The protein is Chloride intracellular channel protein 1 of Homo sapiens (Human).